The sequence spans 906 residues: Inactive angiotensin-converting enzyme-related protein (906 aa).

An N-terminal signal peptide occupies residues 1-19; it reads MKFHILLLLLVGACLPVFT. Positions 28 to 95 are disordered; sequence LLPADEAPKD…SPTPEPEPAI (68 aa). A compositionally biased stretch (basic and acidic residues) spans 67-83; that stretch reads PEPKPEPEPEPEPKPEP. Asn-159 is a glycosylation site (N-linked (GlcNAc...) asparagine). Residues 175-765 enclose the Peptidase M2 domain; the sequence is IKDEEKLRSW…EIDQVVVGWD (591 aa). Cysteines 289 and 297 form a disulfide. Residue Asn-653 is glycosylated (N-linked (GlcNAc...) asparagine). Positions 862 to 882 are disordered; that stretch reads VTTPEPSAEPEPTAKTTTKMP. The segment covering 863 to 882 has biased composition (low complexity); it reads TTPEPSAEPEPTAKTTTKMP.

It belongs to the peptidase M2 family. Expressed in the hypodermis, in the vulva during organogenesis, and in the ray papillae of the male tail.

In terms of biological role, inactive as a metallopeptidase, due to a lack of active site residues. Required for larval molting, male tail development, and formation of adult alae. Acts in the heterochronic pathway and plays a role in the developmental timing of postembryonic hypodermal seam cell division and adult alae production. Acts synergistically with apl-1 in let-7 regulated postembryonic cell division events. Might act downstream of the heterochronic protein lin-41. Negative regulator of lifespan, heat and oxidative stress response and age-related degenerative changes like reduced pharyngeal pumping and decreased body movements. Lifespan restriction is dependent on the forkhead-type transcription factor daf-16. The polypeptide is Inactive angiotensin-converting enzyme-related protein (Caenorhabditis elegans).